A 425-amino-acid chain; its full sequence is Proline iminopeptidase (425 aa).

Residues 52–315 enclose the AB hydrolase-1 domain; it reads PWLLYLQGGP…EFPALAWAQG (264 aa). Serine 146 (nucleophile) is an active-site residue. The active site involves aspartate 351. The active-site Proton donor is the histidine 404.

The protein belongs to the peptidase S33 family. Homotetramer.

It is found in the cytoplasm. It carries out the reaction Release of N-terminal proline from a peptide.. In terms of biological role, higher activity toward long peptides. Acts on hydroxyproline beta-naphthylamide with almost as high an activity as on proline beta-naphthylamide. This is Proline iminopeptidase (pip) from Aeromonas sobria.